We begin with the raw amino-acid sequence, 260 residues long: Pyridoxine 5'-phosphate synthase (260 aa).

2 residues coordinate 3-amino-2-oxopropyl phosphate: N10 and R21. H46 serves as the catalytic Proton acceptor. 1-deoxy-D-xylulose 5-phosphate contacts are provided by R48 and H53. E76 serves as the catalytic Proton acceptor. A 1-deoxy-D-xylulose 5-phosphate-binding site is contributed by T113. The active-site Proton donor is the H204. Residues D205 and 227 to 228 each bind 3-amino-2-oxopropyl phosphate; that span reads GH.

The protein belongs to the PNP synthase family. As to quaternary structure, homooctamer; tetramer of dimers.

The protein localises to the cytoplasm. It carries out the reaction 3-amino-2-oxopropyl phosphate + 1-deoxy-D-xylulose 5-phosphate = pyridoxine 5'-phosphate + phosphate + 2 H2O + H(+). It participates in cofactor biosynthesis; pyridoxine 5'-phosphate biosynthesis; pyridoxine 5'-phosphate from D-erythrose 4-phosphate: step 5/5. Catalyzes the complicated ring closure reaction between the two acyclic compounds 1-deoxy-D-xylulose-5-phosphate (DXP) and 3-amino-2-oxopropyl phosphate (1-amino-acetone-3-phosphate or AAP) to form pyridoxine 5'-phosphate (PNP) and inorganic phosphate. In Xylella fastidiosa (strain 9a5c), this protein is Pyridoxine 5'-phosphate synthase.